A 312-amino-acid chain; its full sequence is MNFMELLLFVLSMLLAVAFLTVAERKTLGYMQRRVGPNAVGYYGVLMAMADAAKLLLKEMILPTHADKFMLIMSPMMTLMSALLCWAMIPFGPGITIMDSNYGFMLALAMGSVGVFGSLFAGWAGNSKYSTIGSMRSTAQLISYELVLTTVILICMLLTGTMNTSRYVELQESMWLVVPLLPLSLMWFMGCVAECARPPFDNVEAESELVSGHMTEYSSSMFVLFFLSEYASMLFYSTLTAILFFGGGTGLILGLKANFFAFTYIWVRAATPRVRYDKLIAMCWIVFLPLLFALALFMPSLIYIMDGYTFME.

The next 8 helical transmembrane spans lie at 3 to 23 (FMEL…LTVA), 37 to 57 (PNAV…KLLL), 69 to 89 (FMLI…WAMI), 104 to 124 (FMLA…AGWA), 141 to 161 (LISY…LTGT), 173 to 193 (SMWL…GCVA), 233 to 253 (MLFY…GLIL), and 279 to 299 (LIAM…LFMP).

The protein belongs to the complex I subunit 1 family.

The protein localises to the mitochondrion inner membrane. It carries out the reaction a ubiquinone + NADH + 5 H(+)(in) = a ubiquinol + NAD(+) + 4 H(+)(out). Core subunit of the mitochondrial membrane respiratory chain NADH dehydrogenase (Complex I) that is believed to belong to the minimal assembly required for catalysis. Complex I functions in the transfer of electrons from NADH to the respiratory chain. The immediate electron acceptor for the enzyme is believed to be ubiquinone. In Debaryomyces hansenii (strain ATCC 36239 / CBS 767 / BCRC 21394 / JCM 1990 / NBRC 0083 / IGC 2968) (Yeast), this protein is NADH-ubiquinone oxidoreductase chain 1 (ND1).